Reading from the N-terminus, the 360-residue chain is Phospho-N-acetylmuramoyl-pentapeptide-transferase (360 aa).

10 helical membrane passes run 26–46, 74–94, 97–117, 134–154, 168–188, 199–219, 236–256, 263–283, 288–308, and 338–358; these read AILG…KLIE, MGGL…GDLG, YVWV…IDDY, YILQ…TAAN, VMPQ…VGSS, GLAI…AYLS, SGEL…FLWF, VFMG…IAVL, ILLV…ILQV, and VIVR…ATLK.

Belongs to the glycosyltransferase 4 family. MraY subfamily. Mg(2+) serves as cofactor.

The protein resides in the cell inner membrane. It carries out the reaction UDP-N-acetyl-alpha-D-muramoyl-L-alanyl-gamma-D-glutamyl-meso-2,6-diaminopimeloyl-D-alanyl-D-alanine + di-trans,octa-cis-undecaprenyl phosphate = di-trans,octa-cis-undecaprenyl diphospho-N-acetyl-alpha-D-muramoyl-L-alanyl-D-glutamyl-meso-2,6-diaminopimeloyl-D-alanyl-D-alanine + UMP. Its pathway is cell wall biogenesis; peptidoglycan biosynthesis. Catalyzes the initial step of the lipid cycle reactions in the biosynthesis of the cell wall peptidoglycan: transfers peptidoglycan precursor phospho-MurNAc-pentapeptide from UDP-MurNAc-pentapeptide onto the lipid carrier undecaprenyl phosphate, yielding undecaprenyl-pyrophosphoryl-MurNAc-pentapeptide, known as lipid I. This chain is Phospho-N-acetylmuramoyl-pentapeptide-transferase, found in Shewanella oneidensis (strain ATCC 700550 / JCM 31522 / CIP 106686 / LMG 19005 / NCIMB 14063 / MR-1).